We begin with the raw amino-acid sequence, 173 residues long: Interferon gamma (173 aa).

The first 22 residues, 1-22, serve as a signal peptide directing secretion; it reads MNATHCILALQLCLLAISGCSS. A Pyrrolidone carboxylic acid modification is found at Gln23. N-linked (GlcNAc...) asparagine glycans are attached at residues Asn38 and Asn105.

This sequence belongs to the type II (or gamma) interferon family. In terms of assembly, homodimer. Interacts with IFNGR1 (via extracellular domain); this interaction promotes IFNGR1 dimerization. As to expression, released primarily from activated T lymphocytes.

Its subcellular location is the secreted. Type II interferon produced by immune cells such as T-cells and NK cells that plays crucial roles in antimicrobial, antiviral, and antitumor responses by activating effector immune cells and enhancing antigen presentation. Primarily signals through the JAK-STAT pathway after interaction with its receptor IFNGR1 to affect gene regulation. Upon IFNG binding, IFNGR1 intracellular domain opens out to allow association of downstream signaling components JAK2, JAK1 and STAT1, leading to STAT1 activation, nuclear translocation and transcription of IFNG-regulated genes. Many of the induced genes are transcription factors such as IRF1 that are able to further drive regulation of a next wave of transcription. Plays a role in class I antigen presentation pathway by inducing a replacement of catalytic proteasome subunits with immunoproteasome subunits. In turn, increases the quantity, quality, and repertoire of peptides for class I MHC loading. Increases the efficiency of peptide generation also by inducing the expression of activator PA28 that associates with the proteasome and alters its proteolytic cleavage preference. Up-regulates as well MHC II complexes on the cell surface by promoting expression of several key molecules such as cathepsins B/CTSB, H/CTSH, and L/CTSL. Participates in the regulation of hematopoietic stem cells during development and under homeostatic conditions by affecting their development, quiescence, and differentiation. In Meriones unguiculatus (Mongolian jird), this protein is Interferon gamma (IFNG).